The chain runs to 807 residues: Spondin-1 (807 aa).

A signal peptide spans Met1–Ala28. A Reelin domain is found at Phe29–Lys194. 17 disulfide bridges follow: Cys44-Cys128, Cys156-Cys182, Cys199-Cys336, Cys200-Cys340, Cys202-Cys415, Cys443-Cys480, Cys454-Cys489, Cys459-Cys494, Cys502-Cys538, Cys513-Cys517, Cys548-Cys554, Cys559-Cys595, Cys570-Cys574, Cys605-Cys610, Cys615-Cys650, Cys626-Cys630, and Cys660-Cys665. Residues Pro195–Pro388 form the Spondin domain. Asn214 carries an N-linked (GlcNAc...) asparagine glycan. The Ca(2+) site is built by Asp325, Asp354, and Asp358. 6 TSP type-1 domains span residues Thr442 to Ser495, Thr501 to Ser555, Ser558 to His611, Pro614 to Pro666, Asp668 to Leu721, and Gly754 to Pro806. Residue Trp448 is glycosylated (C-linked (Man) tryptophan). C-linked (Man) tryptophan; partial glycosylation is present at Trp451. A glycan (C-linked (Man) tryptophan) is linked at Trp507. A glycan (C-linked (Man) tryptophan; partial) is linked at Trp510. The C-linked (Man) tryptophan glycan is linked to Trp564. Residue Trp620 is glycosylated (C-linked (Man) tryptophan; partial). Trp623 carries C-linked (Man) tryptophan glycosylation. A C-linked (Man) tryptophan glycan is attached at Trp674. An N-linked (GlcNAc...) asparagine glycan is attached at Asn681.

In terms of assembly, binds to the central extracellular domain of APP and inhibits beta-secretase cleavage of APP. Highest expression in lung, lower expression in brain, heart, kidney, liver and testis, and lowest expression in pancreas, skeletal muscle and ovary. Not expressed in spleen.

Its subcellular location is the secreted. It is found in the extracellular space. The protein resides in the extracellular matrix. In terms of biological role, cell adhesion protein that promotes the attachment of spinal cord and sensory neuron cells and the outgrowth of neurites in vitro. May contribute to the growth and guidance of axons in both the spinal cord and the PNS. Major factor for vascular smooth muscle cell. The protein is Spondin-1 (SPON1) of Homo sapiens (Human).